Consider the following 370-residue polypeptide: Protein Mut11 (370 aa).

A disordered region spans residues 1–22 (MARGPGDTDMDEASADAAIPSS). WD repeat units lie at residues 38–77 (GHTK…RVNT), 80–119 (GHSC…CLRT), 122–162 (GHTN…CLRE), 165–204 (AHSD…CLKT), 208–247 (RDSP…TRRT), 262–301 (GFLG…VVGR), and 329–370 (GHTA…PAAA).

Belongs to the WD repeat WDR5/wds family.

Its subcellular location is the nucleus. In terms of biological role, part of a complex involved in 'Lys-4' histone H3 methylation. In Chlamydomonas reinhardtii (Chlamydomonas smithii), this protein is Protein Mut11 (Mut11).